A 92-amino-acid polypeptide reads, in one-letter code: Protein canopy homolog 1 (92 aa).

Belongs to the canopy family.

This is Protein canopy homolog 1 (CNPY1) from Homo sapiens (Human).